A 308-amino-acid polypeptide reads, in one-letter code: Glutaminase (308 aa).

The substrate site is built by Ser66, Asn117, Glu161, Asn168, Tyr192, Tyr244, and Val262.

The protein belongs to the glutaminase family. Homotetramer.

It catalyses the reaction L-glutamine + H2O = L-glutamate + NH4(+). This chain is Glutaminase, found in Klebsiella pneumoniae (strain 342).